Reading from the N-terminus, the 423-residue chain is Flavohemoprotein B (423 aa).

Residues 1–136 (MLSQKSIQII…VAQAFMDAEE (136 aa)) enclose the Globin domain. Residue histidine 83 coordinates heme b. Residues tyrosine 93 and glutamate 135 each act as charge relay system in the active site. The segment at 149-423 (WKDTREFVVD…LRGVKNIIEN (275 aa)) is reductase. In terms of domain architecture, FAD-binding FR-type spans 150–268 (KDTREFVVDR…SVPAGDFVVN (119 aa)). FAD contacts are provided by residues tyrosine 188 and 212-215 (RHYS). 281–286 (GVGINP) lines the NADP(+) pocket. Residue 400–403 (LFGP) participates in FAD binding.

Belongs to the globin family. Two-domain flavohemoproteins subfamily. It in the C-terminal section; belongs to the flavoprotein pyridine nucleotide cytochrome reductase family. The cofactor is FAD. Requires heme b as cofactor.

The protein localises to the cytoplasm. It catalyses the reaction 2 nitric oxide + NADPH + 2 O2 = 2 nitrate + NADP(+) + H(+). The catalysed reaction is 2 nitric oxide + NADH + 2 O2 = 2 nitrate + NAD(+) + H(+). Functionally, is involved in NO detoxification in an aerobic process, termed nitric oxide dioxygenase (NOD) reaction that utilizes O(2) and NAD(P)H to convert NO to nitrate, which protects the cell from various noxious nitrogen compounds. Therefore, plays a central role in the inducible response to nitrosative stress. In terms of biological role, in the presence of oxygen and NADH, it has NADH oxidase activity, which leads to the generation of superoxide and H(2)O(2). Under anaerobic conditions, it also exhibits nitric oxide reductase and FAD reductase activities. However, all these reactions are much lower than NOD activity. The polypeptide is Flavohemoprotein B (fhbB) (Dictyostelium discoideum (Social amoeba)).